The sequence spans 327 residues: Aromatase (327 aa).

Residue C315 coordinates heme.

Belongs to the cytochrome P450 family. Heme serves as cofactor.

The protein resides in the membrane. The enzyme catalyses testosterone + 3 reduced [NADPH--hemoprotein reductase] + 3 O2 = 17beta-estradiol + formate + 3 oxidized [NADPH--hemoprotein reductase] + 4 H2O + 4 H(+). It catalyses the reaction androst-4-ene-3,17-dione + 3 reduced [NADPH--hemoprotein reductase] + 3 O2 = estrone + formate + 3 oxidized [NADPH--hemoprotein reductase] + 4 H2O + 4 H(+). Its function is as follows. Catalyzes the formation of aromatic C18 estrogens from C19 androgens. The chain is Aromatase (CYP19A1) from Coturnix japonica (Japanese quail).